A 375-amino-acid polypeptide reads, in one-letter code: MKQKVVVGLSGGVDSSVACYLLLQQGYEVEGLFMRNWDSATNNDILGNTNINDDICPQEQDYLDAKAVADKLNIKLHRVDFIKEYWDYVFSYFIEEYKKARTPNPDILCNKYIKFDKFLNYAINQLNADYIAMGHYAKVEFNKTTKQYELIKASDINKDQTYFLSQLNQNQLSKTLFPLANLTKEQVRKIALEQNLITANKKDSTGICFIGERNFTSFLQNYIPSQTGDIVDIKTNKVLGKHIGIMYYTIGQRKGINLSGMSEPYYVADKDVKKNILYVCSTSDQSYLYSTSCLVNDINWILDISKYVDDVNQFECQAKFRYRQLDNKVVVKKIDDNNYKVMFKKPLKAITIGQQAVFYLDDICLGGAVIDKVIK.

ATP contacts are provided by residues 8–15 and M34; that span reads GLSGGVDS. The tract at residues 104-106 is interaction with target base in tRNA; the sequence is NPD. Catalysis depends on C109, which acts as the Nucleophile. The cysteines at positions 109 and 208 are disulfide-linked. Residue G134 participates in ATP binding. The interaction with tRNA stretch occupies residues 158-160; the sequence is KDQ. C208 serves as the catalytic Cysteine persulfide intermediate. The tract at residues 321-322 is interaction with tRNA; the sequence is RY.

It belongs to the MnmA/TRMU family.

The protein resides in the cytoplasm. The catalysed reaction is S-sulfanyl-L-cysteinyl-[protein] + uridine(34) in tRNA + AH2 + ATP = 2-thiouridine(34) in tRNA + L-cysteinyl-[protein] + A + AMP + diphosphate + H(+). Functionally, catalyzes the 2-thiolation of uridine at the wobble position (U34) of tRNA, leading to the formation of s(2)U34. This chain is tRNA-specific 2-thiouridylase MnmA, found in Mycoplasma capricolum subsp. capricolum (strain California kid / ATCC 27343 / NCTC 10154).